Consider the following 489-residue polypeptide: Glucose-6-phosphate isomerase (489 aa).

The Proton donor role is filled by Glu309. Residues His340 and Lys459 contribute to the active site.

This sequence belongs to the GPI family.

The protein localises to the cytoplasm. The catalysed reaction is alpha-D-glucose 6-phosphate = beta-D-fructose 6-phosphate. It participates in carbohydrate biosynthesis; gluconeogenesis. Its pathway is carbohydrate degradation; glycolysis; D-glyceraldehyde 3-phosphate and glycerone phosphate from D-glucose: step 2/4. Its function is as follows. Catalyzes the reversible isomerization of glucose-6-phosphate to fructose-6-phosphate. The chain is Glucose-6-phosphate isomerase from Idiomarina loihiensis (strain ATCC BAA-735 / DSM 15497 / L2-TR).